The following is a 503-amino-acid chain: Adenosine deaminase 2-A (503 aa).

A signal peptide spans 1–24 (MHVLFLGDLMWIYLLLLCCASCNG). His105 and His107 together coordinate Zn(2+). Residue Asp108 participates in substrate binding. Asn120 carries an N-linked (GlcNAc...) asparagine glycan. A disulfide bond links Cys130 and Cys152. 2 N-linked (GlcNAc...) asparagine glycosylation sites follow: Asn167 and Asn178. Substrate-binding positions include 197–204 (WERFEQVF) and His286. The N-linked (GlcNAc...) asparagine glycan is linked to Asn290. Position 319 (Gly319) interacts with substrate. A Zn(2+)-binding site is contributed by His349. Catalysis depends on Glu352, which acts as the Proton donor. Residue Asn371 is glycosylated (N-linked (GlcNAc...) asparagine). His377 acts as the Proton acceptor in catalysis. Asp434 lines the Zn(2+) pocket. Residue Asp435 coordinates substrate.

The protein belongs to the metallo-dependent hydrolases superfamily. Adenosine and AMP deaminases family. ADGF subfamily. It depends on Zn(2+) as a cofactor.

The protein localises to the secreted. The catalysed reaction is adenosine + H2O + H(+) = inosine + NH4(+). In terms of biological role, adenosine deaminase that may contribute to the degradation of extracellular adenosine, a signaling molecule that controls a variety of cellular responses. May play a role in the regulation of cell proliferation. This chain is Adenosine deaminase 2-A, found in Danio rerio (Zebrafish).